A 356-amino-acid chain; its full sequence is Methylthioribose-1-phosphate isomerase (356 aa).

Substrate-binding positions include R53–A55, R97, and Q203. The active-site Proton donor is the D244. A substrate-binding site is contributed by N254 to K255.

The protein belongs to the eIF-2B alpha/beta/delta subunits family. MtnA subfamily.

The enzyme catalyses 5-(methylsulfanyl)-alpha-D-ribose 1-phosphate = 5-(methylsulfanyl)-D-ribulose 1-phosphate. The protein operates within amino-acid biosynthesis; L-methionine biosynthesis via salvage pathway; L-methionine from S-methyl-5-thio-alpha-D-ribose 1-phosphate: step 1/6. Functionally, catalyzes the interconversion of methylthioribose-1-phosphate (MTR-1-P) into methylthioribulose-1-phosphate (MTRu-1-P). The protein is Methylthioribose-1-phosphate isomerase of Rhodopirellula baltica (strain DSM 10527 / NCIMB 13988 / SH1).